The chain runs to 194 residues: Rho-related protein racC (194 aa).

13 residues coordinate GTP: alanine 17, glycine 19, lysine 20, threonine 21, cysteine 22, glutamate 34, tyrosine 36, threonine 39, glycine 64, lysine 120, aspartate 122, alanine 163, and lysine 164. Threonine 21 lines the Mg(2+) pocket. 2 short sequence motifs (switch) span residues 30-41 (RKFPEDYIPTVF) and 61-79 (DTAGQEEYDQLRPLSYSSA). Residue threonine 39 coordinates Mg(2+). Position 191 is a cysteine methyl ester (cysteine 191). Residue cysteine 191 is the site of S-geranylgeranyl cysteine attachment. A propeptide spans 192–194 (ALL) (removed in mature form).

Belongs to the small GTPase superfamily. Rho family. Interacts (GTP-bound form) with PAK4 (via CRIB domain). Interacts (GTP-bound form) with PAK5 (via CRIB domain). It depends on Mg(2+) as a cofactor.

It is found in the cell membrane. Its subcellular location is the cytoplasm. The protein resides in the cytoskeleton. It carries out the reaction GTP + H2O = GDP + phosphate + H(+). Regulated by guanine nucleotide exchange factors (GEFs) which promote the exchange of bound GDP for free GTP, GTPase activating proteins (GAPs) which increase the GTP hydrolysis activity, and GDP dissociation inhibitors which inhibit the dissociation of the nucleotide from the GTPase. Its function is as follows. Small GTPase which cycles between active GTP-bound and inactive GDP-bound states. The sequence is that of Rho-related protein racC from Entamoeba histolytica (strain ATCC 30459 / HM-1:IMSS / ABRM).